The primary structure comprises 210 residues: uncharacterized protein (210 aa).

This is an uncharacterized protein from Mycobacterium bovis (strain ATCC BAA-935 / AF2122/97).